The sequence spans 354 residues: Heat-inducible transcription repressor HrcA (354 aa).

The protein belongs to the HrcA family.

In terms of biological role, negative regulator of class I heat shock genes (grpE-dnaK-dnaJ and groELS operons). Prevents heat-shock induction of these operons. This is Heat-inducible transcription repressor HrcA from Novosphingobium aromaticivorans (strain ATCC 700278 / DSM 12444 / CCUG 56034 / CIP 105152 / NBRC 16084 / F199).